Here is a 447-residue protein sequence, read N- to C-terminus: GTPase Der (447 aa).

EngA-type G domains lie at 3–167 (PVIA…FAER) and 181–354 (TRIA…AAAM). GTP contacts are provided by residues 9 to 16 (GRPNVGKS), 56 to 60 (DTGGF), 119 to 122 (NKAE), 187 to 194 (GRPNVGKS), 234 to 238 (DTAGL), and 299 to 302 (NKWD). The KH-like domain maps to 355 to 439 (VKLPTPKLTR…PLRIEFRTNK (85 aa)).

The protein belongs to the TRAFAC class TrmE-Era-EngA-EngB-Septin-like GTPase superfamily. EngA (Der) GTPase family. As to quaternary structure, associates with the 50S ribosomal subunit.

Functionally, GTPase that plays an essential role in the late steps of ribosome biogenesis. This is GTPase Der from Ralstonia pickettii (strain 12J).